Consider the following 228-residue polypeptide: Lipoprotein-releasing system ATP-binding protein LolD (228 aa).

In terms of domain architecture, ABC transporter spans 8–228 (LQAKKLVKAY…ELHDGLLRRL (221 aa)). Position 44-51 (44-51 (GASGSGKS)) interacts with ATP.

The protein belongs to the ABC transporter superfamily. Lipoprotein translocase (TC 3.A.1.125) family. The complex is composed of two ATP-binding proteins (LolD) and two transmembrane proteins (LolC and LolE).

The protein localises to the cell inner membrane. Part of the ABC transporter complex LolCDE involved in the translocation of mature outer membrane-directed lipoproteins, from the inner membrane to the periplasmic chaperone, LolA. Responsible for the formation of the LolA-lipoprotein complex in an ATP-dependent manner. This chain is Lipoprotein-releasing system ATP-binding protein LolD, found in Alcanivorax borkumensis (strain ATCC 700651 / DSM 11573 / NCIMB 13689 / SK2).